Reading from the N-terminus, the 248-residue chain is Methionine aminopeptidase 1 (248 aa).

His77 provides a ligand contact to substrate. Residues Asp94, Asp105, and His168 each contribute to the a divalent metal cation site. His175 contributes to the substrate binding site. A divalent metal cation is bound by residues Glu201 and Glu232.

As to quaternary structure, monomer. The cofactor is Co(2+). Zn(2+) is required as a cofactor. Mn(2+) serves as cofactor. It depends on Fe(2+) as a cofactor.

It is found in the cytoplasm. It carries out the reaction Release of N-terminal amino acids, preferentially methionine, from peptides and arylamides.. Functionally, removes the N-terminal methionine from nascent proteins. The N-terminal methionine is often cleaved when the second residue in the primary sequence is small and uncharged (Met-Ala-, Cys, Gly, Pro, Ser, Thr, or Val). Requires deformylation of the N(alpha)-formylated initiator methionine before it can be hydrolyzed. In Bacillus subtilis (strain 168), this protein is Methionine aminopeptidase 1.